The sequence spans 371 residues: Diterpene cyclase DtcycA (371 aa).

The Mg(2+) site is built by Asn-234, Ser-238, and Glu-242.

Belongs to the terpene synthase family. Homodimer. The cofactor is Mg(2+).

The catalysed reaction is (2E,6E,10E)-geranylgeranyl diphosphate = cembrene C + diphosphate. It carries out the reaction (2E,6E,10E)-geranylgeranyl diphosphate + H2O = (R)-nephthenol + diphosphate. Its function is as follows. Diterpene cyclases that can form multiple diterpene products. This chain is Diterpene cyclase DtcycA, found in Streptomyces sp.